Here is a 618-residue protein sequence, read N- to C-terminus: DNA mismatch repair protein MutL (618 aa).

This sequence belongs to the DNA mismatch repair MutL/HexB family.

Its function is as follows. This protein is involved in the repair of mismatches in DNA. It is required for dam-dependent methyl-directed DNA mismatch repair. May act as a 'molecular matchmaker', a protein that promotes the formation of a stable complex between two or more DNA-binding proteins in an ATP-dependent manner without itself being part of a final effector complex. The protein is DNA mismatch repair protein MutL of Bradyrhizobium sp. (strain BTAi1 / ATCC BAA-1182).